The chain runs to 131 residues: Arsenate reductase (131 aa).

Active-site nucleophile residues include cysteine 10, cysteine 82, and cysteine 89. Disulfide bonds link cysteine 10–cysteine 82 and cysteine 82–cysteine 89.

The protein belongs to the low molecular weight phosphotyrosine protein phosphatase family. Thioredoxin-coupled ArsC subfamily.

The protein resides in the cytoplasm. The enzyme catalyses arsenate + [thioredoxin]-dithiol + H(+) = arsenite + [thioredoxin]-disulfide + H2O. Functionally, catalyzes the reduction of arsenate [As(V)] to arsenite [As(III)]. This Staphylococcus aureus (strain COL) protein is Arsenate reductase.